The primary structure comprises 107 residues: Nucleoid-associated protein GDI3467/Gdia_2910 (107 aa).

It belongs to the YbaB/EbfC family. Homodimer.

It is found in the cytoplasm. The protein resides in the nucleoid. Its function is as follows. Binds to DNA and alters its conformation. May be involved in regulation of gene expression, nucleoid organization and DNA protection. This chain is Nucleoid-associated protein GDI3467/Gdia_2910, found in Gluconacetobacter diazotrophicus (strain ATCC 49037 / DSM 5601 / CCUG 37298 / CIP 103539 / LMG 7603 / PAl5).